A 375-amino-acid chain; its full sequence is Putative fimbrium tip subunit Fim1C (375 aa).

The N-terminal stretch at methionine 1–alanine 16 is a signal peptide. The N-palmitoyl cysteine moiety is linked to residue cysteine 17. Cysteine 17 is lipidated: S-diacylglycerol cysteine. Positions cysteine 17–lysine 47 are excised as a propeptide.

Belongs to the bacteroidetes fimbrillin superfamily. FimA/Mfa1 family. In terms of assembly, may be part of the fimbrial tip.

The protein localises to the fimbrium. The protein resides in the cell outer membrane. Its function is as follows. Probably a component of the fimbrium tip. Fimbriae are filamentous appendages on the cell surface that mediate cell adhesion and biofilm formation. This chain is Putative fimbrium tip subunit Fim1C, found in Parabacteroides distasonis (strain ATCC 8503 / DSM 20701 / CIP 104284 / JCM 5825 / NCTC 11152).